A 330-amino-acid chain; its full sequence is MSLSSLDAVLSLIATSSTLDQDSAKVPQCQVCKRKFANQKTLRTHMKHITCRPGRSNVVNHKFRCENCEKQFTNKPNLKRHQITHSGSKSKKCSTCQRTFFREDQLQRHLHNHLKERSHFDCPVLNCSMQFVFYEGVENHLVNHHHFSYSESAPCGKCHKLFGSPRHLLVHYHFDHKEALRSSAPAPTSSARLSPITVSTSGSPRAQLAISPQEKPPQKLSINLGTSPMIEEFCEQNSATLPNTDQQLSPTLSPNEPRFRNLITSEPTPSFECKHCTIKFHDATMSIMHNALHAPGSPFKCAICGAECGNKIVFTMHIITASHDFGGIGT.

5 C2H2-type zinc fingers span residues 27–48 (PQCQ…HMKH), 63–85 (FRCE…QITH), 91–113 (KKCS…LHNH), 120–144 (FDCP…LVNH), and 153–176 (APCG…HFDH). The segment covering 183-195 (SAPAPTSSARLSP) has biased composition (low complexity). The tract at residues 183–203 (SAPAPTSSARLSPITVSTSGS) is disordered. The C2H2-type 6 zinc finger occupies 271-293 (FECKHCTIKFHDATMSIMHNALH).

This sequence belongs to the krueppel C2H2-type zinc-finger protein family. As to expression, expressed in the somatic gonad.

Together with ehn-3, may play a role in gonadogenesis. This Caenorhabditis elegans protein is Zinc finger protein sdz-12.